The sequence spans 390 residues: GTPase Obg (390 aa).

The Obg domain maps to 1–159 (MKFVDEASIL…RELLLELMLL (159 aa)). The segment at 127 to 147 (NTRFKSSVNRTPRQKTNGTPG) is disordered. Over residues 129 to 145 (RFKSSVNRTPRQKTNGT) the composition is skewed to polar residues. The region spanning 160 to 333 (ADVGMLGMPN…LCWDVMTFII (174 aa)) is the OBG-type G domain. GTP-binding positions include 166–173 (GMPNAGKS), 191–195 (FTTLV), 213–216 (DIPG), 283–286 (NKID), and 314–316 (SAA). Residues Ser-173 and Thr-193 each coordinate Mg(2+).

Belongs to the TRAFAC class OBG-HflX-like GTPase superfamily. OBG GTPase family. As to quaternary structure, monomer. Mg(2+) serves as cofactor.

The protein resides in the cytoplasm. An essential GTPase which binds GTP, GDP and possibly (p)ppGpp with moderate affinity, with high nucleotide exchange rates and a fairly low GTP hydrolysis rate. Plays a role in control of the cell cycle, stress response, ribosome biogenesis and in those bacteria that undergo differentiation, in morphogenesis control. The polypeptide is GTPase Obg (Shigella dysenteriae serotype 1 (strain Sd197)).